Reading from the N-terminus, the 426-residue chain is MPLLWLRGFLLASCWIIVKSSPTPGSEGHSAAPNCPSCALATLPKDVPNAQPEMVEAVKKHILNMLHLKKRPDVTQPVPKAALLNAIRKLHVGKVGENGYVEIEDDIGRRAEMNELMEQTSEIITFAESGTARKTLHFEISKEGSDLSVVERAEVWLFLKVPKANRTRSKVTIRLLQQQKHPQGSSDTREEAEEADLMEERSEQLISEKVVDARKSTWHIFPVSSSIQRLLDQGKSSLDIRIACDQCHETGASLVLLGKKKKKEEEGEGKKKDGGEAGAGVDEEKEQSHRPFLMLQARQSEDHPHRRRRRGLECDGKVNICCKKQFFVSFKDIGWNDWIIAPSGYHANYCEGECPSHIAGTSGSSLSFHSTVINQYRLRGHNPFANLKSCCVPTKLRPMSMLYYDDGQNIIKKDIQNMIVEECGCS.

A signal peptide spans 1–20 (MPLLWLRGFLLASCWIIVKS). The propeptide occupies 21–310 (SPTPGSEGHS…EDHPHRRRRR (290 aa)). Asparagine 165 carries an N-linked (GlcNAc...) asparagine glycan. Residues 177–186 (QQQKHPQGSS) show a composition bias toward polar residues. Disordered regions lie at residues 177-201 (QQQKHPQGSSDTREEAEEADLMEER) and 260-291 (KKKKEEEGEGKKKDGGEAGAGVDEEKEQSHRP). The span at 263 to 275 (KEEEGEGKKKDGG) shows a compositional bias: basic and acidic residues. 4 disulfide bridges follow: cysteine 314–cysteine 322, cysteine 321–cysteine 391, cysteine 350–cysteine 423, and cysteine 354–cysteine 425.

Belongs to the TGF-beta family. In terms of assembly, dimeric, linked by one or more disulfide bonds. Inhibin A is a dimer of alpha/INHA and beta-A/INHBA. Activin A is a homodimer of beta-A/INHBA. Activin AB is a dimer of beta-A/INHBA and beta-B/INHBB. Interacts with FST and FSTL3; these interactions prevent activin A interaction to its type II receptor. Activin A interacts with ACVR2A. Activin A interacts with BMPR2. Inhibin A interacts with ACVR1; this interaction creates a non-signaling complex (NSC) that inhibits ACVR1-mediated BMP signaling. Inhibin A interacts with ACVR2A.

The protein resides in the secreted. In terms of biological role, inhibins/activins are involved in regulating a number of diverse functions such as hypothalamic and pituitary hormone secretion, gonadal hormone secretion, germ cell development and maturation, erythroid differentiation, insulin secretion, nerve cell survival, embryonic axial development or bone growth, depending on their subunit composition. Activin A is a homodimer of INHBA that plays a role in several essential biological processes including embryonic development, stem cell maintenance and differentiation, haematopoiesis, cell proliferation and tissue fibrosis. Signals through type I (such as ACVR1B or ACVR1C) and type II receptors (such as ACVR2A, ACVR2B or BMPR2) which, upon ligand binding, phosphorylate SMAD2 and SMAD3 intracellular signaling mediators that form a complex with SMAD4, translocate to the nucleus and modulate gene expression. Can also activate alternative non-canonical intracellular signaling pathways including the p38 MAPK, extracellular signal-regulated kinases 1/2 (ERK1/2) and c-Jun N-terminal kinases (JNKs) to modulate cell migration and differentiation. Alternatively, promotes osteoblastic differentiation via ACVRL1-SMAD1/5/9 pathway. In addition, can engage the type I receptor ACVR1 to form an ACVR1-activin A-type II receptor non-signaling complex (NSC) that renders receptors unavailable for engagement with BMPs, hence resulting in an apparent inhibition of ACVR1-mediated BMP signaling. Its function is as follows. Inhibin A is a dimer of alpha/INHA and beta-A/INHBA that functions as a feedback regulator in the hypothalamic-pituitary-gonadal (HPG) axis. Inhibits the secretion of FSH from the anterior pituitary gland by acting on pituitary gonadotrope cells. Antagonizes activin A by binding to the proteoglycan, betaglycan, and forming a stable complex with and, thereby, sequestering type II activin receptors while excluding type I receptor. The chain is Inhibin beta A chain (INHBA) from Equus caballus (Horse).